Reading from the N-terminus, the 243-residue chain is Pyridoxine 5'-phosphate synthase (243 aa).

Asparagine 9 is a binding site for 3-amino-2-oxopropyl phosphate. 11 to 12 (DH) lines the 1-deoxy-D-xylulose 5-phosphate pocket. Arginine 20 serves as a coordination point for 3-amino-2-oxopropyl phosphate. The active-site Proton acceptor is the histidine 45. 1-deoxy-D-xylulose 5-phosphate-binding residues include arginine 47 and histidine 52. The Proton acceptor role is filled by glutamate 72. Threonine 102 serves as a coordination point for 1-deoxy-D-xylulose 5-phosphate. Residue histidine 193 is the Proton donor of the active site. 3-amino-2-oxopropyl phosphate-binding positions include glycine 194 and 215 to 216 (GH).

The protein belongs to the PNP synthase family. As to quaternary structure, homooctamer; tetramer of dimers.

It localises to the cytoplasm. It catalyses the reaction 3-amino-2-oxopropyl phosphate + 1-deoxy-D-xylulose 5-phosphate = pyridoxine 5'-phosphate + phosphate + 2 H2O + H(+). It functions in the pathway cofactor biosynthesis; pyridoxine 5'-phosphate biosynthesis; pyridoxine 5'-phosphate from D-erythrose 4-phosphate: step 5/5. Its function is as follows. Catalyzes the complicated ring closure reaction between the two acyclic compounds 1-deoxy-D-xylulose-5-phosphate (DXP) and 3-amino-2-oxopropyl phosphate (1-amino-acetone-3-phosphate or AAP) to form pyridoxine 5'-phosphate (PNP) and inorganic phosphate. This is Pyridoxine 5'-phosphate synthase from Shigella sonnei (strain Ss046).